A 363-amino-acid polypeptide reads, in one-letter code: tRNA N6-adenosine threonylcarbamoyltransferase (363 aa).

Fe cation contacts are provided by histidine 121 and histidine 125. Substrate is bound by residues 143-147, aspartate 176, glycine 189, and asparagine 287; that span reads LASGG. Fe cation is bound at residue aspartate 315.

This sequence belongs to the KAE1 / TsaD family. The cofactor is Fe(2+).

It localises to the cytoplasm. It carries out the reaction L-threonylcarbamoyladenylate + adenosine(37) in tRNA = N(6)-L-threonylcarbamoyladenosine(37) in tRNA + AMP + H(+). Its function is as follows. Required for the formation of a threonylcarbamoyl group on adenosine at position 37 (t(6)A37) in tRNAs that read codons beginning with adenine. Is involved in the transfer of the threonylcarbamoyl moiety of threonylcarbamoyl-AMP (TC-AMP) to the N6 group of A37, together with TsaE and TsaB. TsaD likely plays a direct catalytic role in this reaction. The protein is tRNA N6-adenosine threonylcarbamoyltransferase of Rhodopseudomonas palustris (strain TIE-1).